Consider the following 117-residue polypeptide: DNA-directed RNA polymerase subunit omega (117 aa).

It belongs to the RNA polymerase subunit omega family. In terms of assembly, the RNAP catalytic core consists of 2 alpha, 1 beta, 1 beta' and 1 omega subunit. When a sigma factor is associated with the core the holoenzyme is formed, which can initiate transcription.

It catalyses the reaction RNA(n) + a ribonucleoside 5'-triphosphate = RNA(n+1) + diphosphate. Functionally, promotes RNA polymerase assembly. Latches the N- and C-terminal regions of the beta' subunit thereby facilitating its interaction with the beta and alpha subunits. This chain is DNA-directed RNA polymerase subunit omega, found in Ruegeria pomeroyi (strain ATCC 700808 / DSM 15171 / DSS-3) (Silicibacter pomeroyi).